Here is a 505-residue protein sequence, read N- to C-terminus: Protein disulfide-isomerase A3 (505 aa).

The N-terminal stretch at 1–24 (MSVPRPSRAALLLLVPLLALSAGA) is a signal peptide. 2 consecutive Thioredoxin domains span residues 25–131 (SDVV…KQAG) and 341–483 (SRDG…REAT). Catalysis depends on nucleophile residues C55 and C58. Intrachain disulfides connect C55–C58, C83–C90, and C404–C407. Residues C404 and C407 each act as nucleophile in the active site. A disordered region spans residues 486–505 (PVLQEEDKAKKSKKKAKEDL). The segment covering 495 to 505 (KKSKKKAKEDL) has biased composition (basic residues). A Prevents secretion from ER motif is present at residues 502 to 505 (KEDL).

Belongs to the protein disulfide isomerase family.

The protein localises to the endoplasmic reticulum. The protein resides in the endoplasmic reticulum lumen. Its subcellular location is the melanosome. It catalyses the reaction Catalyzes the rearrangement of -S-S- bonds in proteins.. Its function is as follows. Protein disulfide isomerase that catalyzes the formation, isomerization, and reduction or oxidation of disulfide bonds in client proteins and functions as a protein folding chaperone. This chain is Protein disulfide-isomerase A3 (PDIA3), found in Gallus gallus (Chicken).